The following is a 430-amino-acid chain: Proteasome-activating nucleotidase (430 aa).

A coiled-coil region spans residues 9 to 89 (TELKKEKKAF…LRRELDRMRV (81 aa)). ATP is bound by residues 214–219 (GTGKTL) and His-353. The interval 428 to 430 (LYR) is docks into pockets in the proteasome alpha-ring to cause gate opening.

It belongs to the AAA ATPase family. Homohexamer. The hexameric complex has a two-ring architecture resembling a top hat that caps the 20S proteasome core at one or both ends. Alone, can form a complex composed of two stacked hexameric rings in vitro. Upon ATP-binding, the C-terminus of PAN interacts with the alpha-rings of the proteasome core by binding to the intersubunit pockets.

Its subcellular location is the cytoplasm. ATPase activity is inhibited by EDTA, N-ethylmaleimide (NEM) and p-chloromercuriphenyl-sulfonic acid (PCMS) in vitro. In terms of biological role, ATPase which is responsible for recognizing, binding, unfolding and translocation of substrate proteins into the archaeal 20S proteasome core particle. Is essential for opening the gate of the 20S proteasome via an interaction with its C-terminus, thereby allowing substrate entry and access to the site of proteolysis. Thus, the C-termini of the proteasomal ATPase function like a 'key in a lock' to induce gate opening and therefore regulate proteolysis. Unfolding activity requires energy from ATP hydrolysis, whereas ATP binding alone promotes ATPase-20S proteasome association which triggers gate opening, and supports translocation of unfolded substrates. In addition to ATP, is able to cleave other nucleotide triphosphates such as CTP, GTP and UTP, but hydrolysis of these other nucleotides is less effective in promoting proteolysis than ATP. Moreover, PAN by itself can function as a chaperone in vitro. This chain is Proteasome-activating nucleotidase, found in Methanocaldococcus jannaschii (strain ATCC 43067 / DSM 2661 / JAL-1 / JCM 10045 / NBRC 100440) (Methanococcus jannaschii).